Reading from the N-terminus, the 291-residue chain is Methionine aminopeptidase (291 aa).

His-118 contributes to the substrate binding site. 3 residues coordinate a divalent metal cation: Asp-135, Asp-146, and His-209. Residue His-216 coordinates substrate. A divalent metal cation is bound by residues Glu-241 and Glu-273.

This sequence belongs to the peptidase M24A family. Methionine aminopeptidase type 1 subfamily. In terms of assembly, monomer. Co(2+) is required as a cofactor. It depends on Zn(2+) as a cofactor. Mn(2+) serves as cofactor. The cofactor is Fe(2+).

It carries out the reaction Release of N-terminal amino acids, preferentially methionine, from peptides and arylamides.. Removes the N-terminal methionine from nascent proteins. The N-terminal methionine is often cleaved when the second residue in the primary sequence is small and uncharged (Met-Ala-, Cys, Gly, Pro, Ser, Thr, or Val). Requires deformylation of the N(alpha)-formylated initiator methionine before it can be hydrolyzed. In Chlamydia pneumoniae (Chlamydophila pneumoniae), this protein is Methionine aminopeptidase.